Here is a 69-residue protein sequence, read N- to C-terminus: A-kinase anchor protein inhibitor 1 (69 aa).

Positions 39–69 are disordered; that stretch reads QESLRREGRPGDSRAWGQLGGCELTKKHEKK. A compositionally biased stretch (basic and acidic residues) spans 41–50; sequence SLRREGRPGD.

As to quaternary structure, binds cAMP-dependent protein kinase (PKA). Interacts specifically with RII-regulatory subunits of PKA (PRKAR2A and PRKAR2B). In terms of tissue distribution, preferentially expressed in the neural tissues.

Protein kinase A (PKA)-binding protein. Binds to type II regulatory subunits of protein kinase A (PKA) and may block the A-kinase anchoring protein (AKAP)-mediated subcellular localization of PKA. In Mus musculus (Mouse), this protein is A-kinase anchor protein inhibitor 1.